Consider the following 166-residue polypeptide: Urocortin-3 (166 aa).

Residues 1–23 form the signal peptide; sequence MLVPAPFLLVLLLLLGAPQVGLS. Residues 24–123 constitute a propeptide that is removed on maturation; the sequence is QRSPKAGSSP…QDKAKSDRRT (100 aa). Residues 41–51 show a composition bias toward basic and acidic residues; that stretch reads REAEKSQRKDT. A disordered region spans residues 41–123; that stretch reads REAEKSQRKD…QDKAKSDRRT (83 aa). Over residues 68–77 the composition is skewed to acidic residues; that stretch reads EDQEGQEEED. Residues 86–96 show a composition bias toward gly residues; sequence SVGGGGGGGAG. Positions 113-123 are enriched in basic and acidic residues; sequence SQDKAKSDRRT. Ile162 is modified (isoleucine amide).

The protein belongs to the sauvagine/corticotropin-releasing factor/urotensin I family. As to quaternary structure, binds with high affinity to CRF receptors 2-alpha and 2-beta.

It localises to the secreted. Its function is as follows. Suppresses food intake, delays gastric emptying and decreases heat-induced edema. Might represent an endogenous ligand for maintaining homeostasis after stress. In Bos taurus (Bovine), this protein is Urocortin-3 (UCN3).